A 472-amino-acid polypeptide reads, in one-letter code: DEAD-box ATP-dependent RNA helicase 58, chloroplastic (472 aa).

Residues 1 to 54 constitute a chloroplast transit peptide; the sequence is MASQLLNVPHLAFFPKISYASVFSTLKPSFFHSTSTRRALKSSPSSRIINLQAV. The short motif at 76–104 is the Q motif element; it reads RQICQGFVPEHILHRMEEIGFVFPTDIQR. The 180-residue stretch at 107 to 286 folds into the Helicase ATP-binding domain; that stretch reads LPTLFTGRDC…DCIQQKWTKR (180 aa). 120–127 is a binding site for ATP; the sequence is AQTGSGKT. The short motif at 231 to 234 is the DEAD box element; the sequence is DEVD. Positions 314-472 constitute a Helicase C-terminal domain; it reads NKHQVLLALL…LMFSCEEMML (159 aa).

It belongs to the DEAD box helicase family.

Its subcellular location is the plastid. It is found in the chloroplast. It catalyses the reaction ATP + H2O = ADP + phosphate + H(+). In Arabidopsis thaliana (Mouse-ear cress), this protein is DEAD-box ATP-dependent RNA helicase 58, chloroplastic (RH58).